A 184-amino-acid chain; its full sequence is Photosystem I assembly protein Ycf4 (184 aa).

2 helical membrane passes run 22-42 and 57-77; these read FCWA…GTSS and ILFF…LFIS.

This sequence belongs to the Ycf4 family.

The protein localises to the plastid. The protein resides in the chloroplast thylakoid membrane. Seems to be required for the assembly of the photosystem I complex. The protein is Photosystem I assembly protein Ycf4 of Liriodendron tulipifera (Tuliptree).